Here is a 204-residue protein sequence, read N- to C-terminus: Large ribosomal subunit protein eL15 (204 aa).

The disordered stretch occupies residues 161–180; that stretch reads MRGLTSAGKKSRGLGKGHKF. Residues 169–180 are compositionally biased toward basic residues; it reads KKSRGLGKGHKF.

This sequence belongs to the eukaryotic ribosomal protein eL15 family. As to quaternary structure, component of the large ribosomal subunit.

The protein resides in the cytoplasm. In terms of biological role, component of the large ribosomal subunit. The ribosome is a large ribonucleoprotein complex responsible for the synthesis of proteins in the cell. This chain is Large ribosomal subunit protein eL15 (rpl15), found in Ictalurus punctatus (Channel catfish).